We begin with the raw amino-acid sequence, 638 residues long: Growth hormone receptor (638 aa).

Residues 1 to 18 (MDLWRVFLTLALAVSSDM) form the signal peptide. Residues 19–265 (FPGSGATPAT…TLAACEEDFR (247 aa)) lie on the Extracellular side of the membrane. Disulfide bonds link Cys-56–Cys-66 and Cys-101–Cys-112. N-linked (GlcNAc...) asparagine glycosylation is present at Asn-115. Cysteines 126 and 140 form a disulfide. A Fibronectin type-III domain is found at 151-254 (PPIGLNWTLL…EVLRVTFPQM (104 aa)). 3 N-linked (GlcNAc...) asparagine glycosylation sites follow: Asn-156, Asn-161, and Asn-200. Residues 240 to 244 (YSEFS) carry the WSXWS motif motif. Residues 266 to 289 (FPWFLIIIFGIFGVAVMLFVVIFS) form a helical membrane-spanning segment. Residues 290–638 (KQQRIKMLIL…STDQLNKIMQ (349 aa)) are Cytoplasmic-facing. The tract at residues 295–380 (KMLILPPVPV…QEKSAGILGA (86 aa)) is required for JAK2 binding. A Box 1 motif motif is present at residues 298 to 306 (ILPPVPVPK). Residues 341 to 350 (DSWVEFIELD) carry the UbE motif motif. Position 342 is a phosphoserine (Ser-342). Residues 357–389 (KTEESDTDRLLSDDQEKSAGILGAKDDDSGRTS) are disordered. Residues 363–373 (TDRLLSDDQEK) are compositionally biased toward basic and acidic residues. Residues Tyr-487 and Tyr-594 each carry the phosphotyrosine modification.

This sequence belongs to the type I cytokine receptor family. Type 1 subfamily. On growth hormone (GH) binding, forms homodimers and binds JAK2 via a box 1-containing domain. Post-translationally, the soluble form (GHBP) is produced by phorbol ester-promoted proteolytic cleavage at the cell surface (shedding) by ADAM17/TACE. Shedding is inhibited by growth hormone (GH) binding to the receptor probably due to a conformational change in GHR rendering the receptor inaccessible to ADAM17. On GH binding, phosphorylated on tyrosine residues in the cytoplasmic domain by JAK2. Phosphorylation on either (or all of) Tyr-534, Tyr-566 and/or Tyr-627 is required for STAT5 activation. Phosphorylation on Tyr-333 would seem necessary for JAK2 activation. In terms of processing, ubiquitinated by the ECS(SOCS2) complex following ligand-binding and phosphorylation by JAK2, leading to its degradation by the proteasome. Regulation by the ECS(SOCS2) complex acts as a negative feedback loop of growth hormone receptor signaling. Ubiquitination is not sufficient for GHR internalization. As to expression, highest expression in liver. Also expressed in heart, kidney and muscle.

The protein resides in the cell membrane. Its subcellular location is the secreted. Its function is as follows. Receptor for pituitary gland growth hormone involved in regulating postnatal body growth. On ligand binding, couples to, and activates the JAK2/STAT5 pathway. In terms of biological role, receptor for pituitary gland growth hormone (GH1) involved in regulating postnatal body growth. On ligand binding, couples to the JAK2/STAT5 pathway. Functionally, the soluble form (GHBP) acts as a reservoir of growth hormone in plasma and may be a modulator/inhibitor of GH signaling. The polypeptide is Growth hormone receptor (Ghr) (Rattus norvegicus (Rat)).